The primary structure comprises 389 residues: 26S proteasome non-ATPase regulatory subunit 6 (389 aa).

The PCI domain maps to 193–361; sequence DFKQAAELFL…EIVETNRPDS (169 aa).

It belongs to the proteasome subunit S10 family. As to quaternary structure, component of the 19S proteasome regulatory particle complex. The 26S proteasome consists of a 20S core particle (CP) and two 19S regulatory subunits (RP). The regulatory particle is made of a lid composed of 9 subunits including PSMD6, a base containing 6 ATPases and few additional components.

Functionally, component of the 26S proteasome, a multiprotein complex involved in the ATP-dependent degradation of ubiquitinated proteins. This complex plays a key role in the maintenance of protein homeostasis by removing misfolded or damaged proteins, which could impair cellular functions, and by removing proteins whose functions are no longer required. Therefore, the proteasome participates in numerous cellular processes, including cell cycle progression, apoptosis, or DNA damage repair. The sequence is that of 26S proteasome non-ATPase regulatory subunit 6 (Psmd6) from Mus musculus (Mouse).